Here is a 206-residue protein sequence, read N- to C-terminus: Large ribosomal subunit protein uL4 (206 aa).

Belongs to the universal ribosomal protein uL4 family. In terms of assembly, part of the 50S ribosomal subunit.

Its function is as follows. One of the primary rRNA binding proteins, this protein initially binds near the 5'-end of the 23S rRNA. It is important during the early stages of 50S assembly. It makes multiple contacts with different domains of the 23S rRNA in the assembled 50S subunit and ribosome. Functionally, forms part of the polypeptide exit tunnel. This is Large ribosomal subunit protein uL4 from Rhodopseudomonas palustris (strain BisA53).